A 143-amino-acid chain; its full sequence is MKKMLMLAFTFLLALTIHVGEASAVIVKDEEKVSFTMTENEKWFMKSDDLNSNHWTSHFGYRFTIFDTEGCTINARIMRMTLSGYEITVSEKNFSGDHFDFSATDRVETMPYKTHYLILTKDPDCGDVKVKGLYGFQFDQPEW.

Residues 1-24 form the signal peptide; that stretch reads MKKMLMLAFTFLLALTIHVGEASA.

This is an uncharacterized protein from Bacillus subtilis (strain 168).